We begin with the raw amino-acid sequence, 466 residues long: Asparagine--tRNA ligase (466 aa).

The protein belongs to the class-II aminoacyl-tRNA synthetase family. In terms of assembly, homodimer.

The protein resides in the cytoplasm. It carries out the reaction tRNA(Asn) + L-asparagine + ATP = L-asparaginyl-tRNA(Asn) + AMP + diphosphate + H(+). The sequence is that of Asparagine--tRNA ligase from Shewanella halifaxensis (strain HAW-EB4).